The following is a 688-amino-acid chain: UvrABC system protein B (688 aa).

A Helicase ATP-binding domain is found at Gly31 to Gln414. Gly44–Ser51 contacts ATP. The short motif at Tyr97 to Ile120 is the Beta-hairpin element. One can recognise a Helicase C-terminal domain in the interval Gln434–Thr600. A disordered region spans residues Leu614–Ile633. The 36-residue stretch at Glu642–Asp677 folds into the UVR domain.

The protein belongs to the UvrB family. In terms of assembly, forms a heterotetramer with UvrA during the search for lesions. Interacts with UvrC in an incision complex.

The protein localises to the cytoplasm. Functionally, the UvrABC repair system catalyzes the recognition and processing of DNA lesions. A damage recognition complex composed of 2 UvrA and 2 UvrB subunits scans DNA for abnormalities. Upon binding of the UvrA(2)B(2) complex to a putative damaged site, the DNA wraps around one UvrB monomer. DNA wrap is dependent on ATP binding by UvrB and probably causes local melting of the DNA helix, facilitating insertion of UvrB beta-hairpin between the DNA strands. Then UvrB probes one DNA strand for the presence of a lesion. If a lesion is found the UvrA subunits dissociate and the UvrB-DNA preincision complex is formed. This complex is subsequently bound by UvrC and the second UvrB is released. If no lesion is found, the DNA wraps around the other UvrB subunit that will check the other stand for damage. The chain is UvrABC system protein B from Leifsonia xyli subsp. xyli (strain CTCB07).